The sequence spans 213 residues: Imidazole glycerol phosphate synthase subunit HisH (213 aa).

The Glutamine amidotransferase type-1 domain maps to 1–212; it reads MLAILDYKAG…HRYCTEAADA (212 aa). Cys79 acts as the Nucleophile in catalysis. Active-site residues include His187 and Glu189.

In terms of assembly, heterodimer of HisH and HisF.

The protein localises to the cytoplasm. The enzyme catalyses 5-[(5-phospho-1-deoxy-D-ribulos-1-ylimino)methylamino]-1-(5-phospho-beta-D-ribosyl)imidazole-4-carboxamide + L-glutamine = D-erythro-1-(imidazol-4-yl)glycerol 3-phosphate + 5-amino-1-(5-phospho-beta-D-ribosyl)imidazole-4-carboxamide + L-glutamate + H(+). The catalysed reaction is L-glutamine + H2O = L-glutamate + NH4(+). The protein operates within amino-acid biosynthesis; L-histidine biosynthesis; L-histidine from 5-phospho-alpha-D-ribose 1-diphosphate: step 5/9. In terms of biological role, IGPS catalyzes the conversion of PRFAR and glutamine to IGP, AICAR and glutamate. The HisH subunit catalyzes the hydrolysis of glutamine to glutamate and ammonia as part of the synthesis of IGP and AICAR. The resulting ammonia molecule is channeled to the active site of HisF. The chain is Imidazole glycerol phosphate synthase subunit HisH from Nitratidesulfovibrio vulgaris (strain DP4) (Desulfovibrio vulgaris).